The chain runs to 168 residues: Mitochondrial inner membrane protein Mpv17 (168 aa).

4 helical membrane-spanning segments follow: residues 12 to 29, 41 to 61, 82 to 101, and 144 to 166; these read INVA…QFFF, RTLR…RRWY, MLVD…SFLV, and LGYQ…SMIL.

This sequence belongs to the peroxisomal membrane protein PXMP2/4 family. As to quaternary structure, part of a larger complex that may be a homohexamer.

It is found in the mitochondrion inner membrane. Functionally, non-selective channel that modulates the membrane potential under normal conditions and oxidative stress, and is involved in mitochondrial homeostasis. Can translocate uridine, but not orotate, across a lipid membrane. Involved in maintenance of mitochondrial ultrastructure. May be involved in mitochondrial DNA (mtDNA) maintenance but does not appear to be directly involved in mitochondrial deoxynucleoside triphosphate (dNTP) pool homeostasis. May be involved in the regulation of reactive oxygen species metabolism and the control of oxidative phosphorylation. In Drosophila melanogaster (Fruit fly), this protein is Mitochondrial inner membrane protein Mpv17.